The primary structure comprises 454 residues: UDP-N-acetylmuramoyl-tripeptide--D-alanyl-D-alanine ligase (454 aa).

ATP is bound at residue Gly-116–Thr-122.

The protein belongs to the MurCDEF family. MurF subfamily.

The protein resides in the cytoplasm. The enzyme catalyses D-alanyl-D-alanine + UDP-N-acetyl-alpha-D-muramoyl-L-alanyl-gamma-D-glutamyl-meso-2,6-diaminopimelate + ATP = UDP-N-acetyl-alpha-D-muramoyl-L-alanyl-gamma-D-glutamyl-meso-2,6-diaminopimeloyl-D-alanyl-D-alanine + ADP + phosphate + H(+). Its pathway is cell wall biogenesis; peptidoglycan biosynthesis. Functionally, involved in cell wall formation. Catalyzes the final step in the synthesis of UDP-N-acetylmuramoyl-pentapeptide, the precursor of murein. The polypeptide is UDP-N-acetylmuramoyl-tripeptide--D-alanyl-D-alanine ligase (Synechocystis sp. (strain ATCC 27184 / PCC 6803 / Kazusa)).